We begin with the raw amino-acid sequence, 189 residues long: MVKMIVGLGNPGSKYEKTKHNIGFMAIDNIVKNLDVTFTDDKNFKAQIGSTFINHEKVYFVKPTTFMNNSGIAVKALLTYYNIDITDLIVIYDDLDMEVSKLRLRSKGSAGGHNGIKSIIAHIGTQEFNRIKVGIGRPLKGMTVINHVMGQFNTEDNIAISLTLDRVVNAVKFYLQENDFEKTMQKFNG.

Position 15 (Y15) interacts with tRNA. H20 (proton acceptor) is an active-site residue. Residues F66, N68, and N114 each coordinate tRNA.

The protein belongs to the PTH family. As to quaternary structure, monomer.

Its subcellular location is the cytoplasm. It catalyses the reaction an N-acyl-L-alpha-aminoacyl-tRNA + H2O = an N-acyl-L-amino acid + a tRNA + H(+). Its function is as follows. Hydrolyzes ribosome-free peptidyl-tRNAs (with 1 or more amino acids incorporated), which drop off the ribosome during protein synthesis, or as a result of ribosome stalling. Catalyzes the release of premature peptidyl moieties from peptidyl-tRNA molecules trapped in stalled 50S ribosomal subunits, and thus maintains levels of free tRNAs and 50S ribosomes. This Streptococcus pyogenes serotype M1 protein is Peptidyl-tRNA hydrolase.